A 150-amino-acid chain; its full sequence is FAD synthase (150 aa).

ATP is bound by residues 11–12 (TF), 16–19 (HPGH), aspartate 96, and tyrosine 124.

It belongs to the archaeal FAD synthase family. Homodimer. A divalent metal cation serves as cofactor.

It catalyses the reaction FMN + ATP + H(+) = FAD + diphosphate. It functions in the pathway cofactor biosynthesis; FAD biosynthesis; FAD from FMN: step 1/1. Functionally, catalyzes the transfer of the AMP portion of ATP to flavin mononucleotide (FMN) to produce flavin adenine dinucleotide (FAD) coenzyme. This chain is FAD synthase, found in Methanococcus maripaludis (strain DSM 14266 / JCM 13030 / NBRC 101832 / S2 / LL).